The sequence spans 430 residues: Glutamate-1-semialdehyde 2,1-aminomutase (430 aa).

Lysine 267 carries the post-translational modification N6-(pyridoxal phosphate)lysine.

Belongs to the class-III pyridoxal-phosphate-dependent aminotransferase family. HemL subfamily. Homodimer. Pyridoxal 5'-phosphate serves as cofactor.

It is found in the cytoplasm. The enzyme catalyses (S)-4-amino-5-oxopentanoate = 5-aminolevulinate. Its pathway is porphyrin-containing compound metabolism; protoporphyrin-IX biosynthesis; 5-aminolevulinate from L-glutamyl-tRNA(Glu): step 2/2. This Cytophaga hutchinsonii (strain ATCC 33406 / DSM 1761 / CIP 103989 / NBRC 15051 / NCIMB 9469 / D465) protein is Glutamate-1-semialdehyde 2,1-aminomutase.